Here is an 821-residue protein sequence, read N- to C-terminus: Elongator complex protein 2 (821 aa).

WD repeat units lie at residues 56 to 100 (GHTA…VLKS), 105 to 152 (GHEG…VKCL), 160 to 200 (GFVL…FQKM), 205 to 246 (GHED…TSLE), 280 to 328 (GHEN…GVWL), 338 to 377 (GNTL…PRQW), 385 to 424 (GHFD…NQSQ), 435 to 473 (IHGY…VENF), 563 to 607 (GHGY…QVQS), 610 to 649 (YHTL…SAEF), 665 to 704 (VHSR…YNPM), 716 to 760 (DVGS…QETK), and 773 to 821 (SHTL…RCAL).

Belongs to the WD repeat ELP2 family. In terms of assembly, component of the elongator complex which consists of ELP1, ELP2, ELP3, ELP4, ELP5 and ELP6. Interacts with STAT3 and JAKs.

The protein resides in the cytoplasm. It localises to the nucleus. Its pathway is tRNA modification; 5-methoxycarbonylmethyl-2-thiouridine-tRNA biosynthesis. Component of the elongator complex which is required for multiple tRNA modifications, including mcm5U (5-methoxycarbonylmethyl uridine), mcm5s2U (5-methoxycarbonylmethyl-2-thiouridine), and ncm5U (5-carbamoylmethyl uridine). The elongator complex catalyzes the formation of carboxymethyluridine in the wobble base at position 34 in tRNAs. This chain is Elongator complex protein 2 (Elp2), found in Rattus norvegicus (Rat).